A 991-amino-acid chain; its full sequence is Pentatricopeptide repeat-containing protein At1g73710 (991 aa).

Disordered regions lie at residues 1–27 (MLQP…HHHH) and 61–81 (SSSS…RKRK). Over residues 15–27 (VRHHHHHHHHHHH) the composition is skewed to basic residues. Residues 61 to 73 (SSSSVSPPRCSKP) are compositionally biased toward low complexity. PPR repeat units follow at residues 144-178 (NVIH…GVLP), 179-213 (TNNT…MHFP), 214-248 (DEVT…KVDL), 304-338 (LTST…GVPI), 339-373 (DTVT…GISP), 374-408 (DTKT…GLFP), 409-443 (DTVT…SIRI), 444-474 (DEHS…FQLD), 478-513 (SSTT…GQRN), 514-548 (DVLE…GTWP), 549-583 (DECT…GCKP), 584-618 (GCKT…GVKP), 619-653 (NEVV…GVQS), 654-688 (NHIV…EGGP), 689-719 (DVAA…LREK), 723-757 (DVIS…GLLS), 758-792 (DCTS…RKLL), 862-896 (EHFA…GLEP), and 897-931 (DIVT…ELEP). Positions 965 to 974 (AERECSSRSG) are enriched in basic and acidic residues. The interval 965-991 (AERECSSRSGEEEEDDEEENSEEDEAF) is disordered. A compositionally biased stretch (acidic residues) spans 975 to 991 (EEEEDDEEENSEEDEAF).

The protein belongs to the PPR family. P subfamily.

The chain is Pentatricopeptide repeat-containing protein At1g73710 from Arabidopsis thaliana (Mouse-ear cress).